The chain runs to 103 residues: MAVSKIRIKLKAYDHEVIDKTARSIVETAERTGAFVFGPVPLPTKRSRYTVIRGPFKDKDSREHFQLNTHKRLIDIQQPTPRTVDSLQRLDLPAGVNIEIKAT.

The protein belongs to the universal ribosomal protein uS10 family. As to quaternary structure, part of the 30S ribosomal subunit.

Functionally, involved in the binding of tRNA to the ribosomes. The chain is Small ribosomal subunit protein uS10 from Rubrobacter xylanophilus (strain DSM 9941 / JCM 11954 / NBRC 16129 / PRD-1).